Reading from the N-terminus, the 83-residue chain is Retinal cone rhodopsin-sensitive cGMP 3',5'-cyclic phosphodiesterase subunit gamma (83 aa).

A compositionally biased stretch (low complexity) spans 1-19 (MSDNTTLAPPAASQAPATP). A disordered region spans residues 1-51 (MSDNTTLAPPAASQAPATPRKGPPKFKQRQTRQFKSKPPKKGVKGFGDDIP). The segment covering 22 to 43 (GPPKFKQRQTRQFKSKPPKKGV) has biased composition (basic residues).

It belongs to the rod/cone cGMP-PDE gamma subunit family. In terms of assembly, tetramer composed of two catalytic chains (alpha and beta), and two inhibitory chains (gamma).

It catalyses the reaction 3',5'-cyclic GMP + H2O = GMP + H(+). Its function is as follows. Participates in processes of transmission and amplification of the visual signal. cGMP-PDEs are the effector molecules in G-protein-mediated phototransduction in vertebrate rods and cones. This Ictidomys tridecemlineatus (Thirteen-lined ground squirrel) protein is Retinal cone rhodopsin-sensitive cGMP 3',5'-cyclic phosphodiesterase subunit gamma (PDE6H).